The chain runs to 370 residues: MTEKINLLNLSETELQGFIASQGQPLYRATQLLQWIHQRGVTDFSLMTDLSKPFRQQLSEASFVRVPELALERVSADGTHKWLFRLADNNKIETVFIPDRKRGTLCVSSQVGCALNCSFCATGKEGFNRNLTLAEIIGQVWLAARLLKSPYKITNVVMMGMGEPLLNYEAVVAAMHLMMHDHAYGLSKYRVTLSTSGVIPAMRRLREESPVSLAVSLHAPNDALRNVLIPLNKKYSLDQLIPLCRDYYSRGSKRCVTFEYVMIEGMNDRLIDAKQLIRLLADVPCKINLIPFNSFQGTAYRCSTESAISVFQKCLMDAGFNTRVRRTRGDDIAGACGQLAGQFHDRTGRHQRWVQKQGHDFNRPIPAIDH.

Residue Glu93 is the Proton acceptor of the active site. Residues 99–331 enclose the Radical SAM core domain; the sequence is DRKRGTLCVS…TRVRRTRGDD (233 aa). A disulfide bridge connects residues Cys106 and Cys336. Residues Cys113, Cys117, and Cys120 each coordinate [4Fe-4S] cluster. S-adenosyl-L-methionine is bound by residues 162–163, Ser194, 216–218, and Asn293; these read GE and SLH. Cys336 serves as the catalytic S-methylcysteine intermediate.

This sequence belongs to the radical SAM superfamily. RlmN family. It depends on [4Fe-4S] cluster as a cofactor.

The protein resides in the cytoplasm. It catalyses the reaction adenosine(2503) in 23S rRNA + 2 reduced [2Fe-2S]-[ferredoxin] + 2 S-adenosyl-L-methionine = 2-methyladenosine(2503) in 23S rRNA + 5'-deoxyadenosine + L-methionine + 2 oxidized [2Fe-2S]-[ferredoxin] + S-adenosyl-L-homocysteine. The catalysed reaction is adenosine(37) in tRNA + 2 reduced [2Fe-2S]-[ferredoxin] + 2 S-adenosyl-L-methionine = 2-methyladenosine(37) in tRNA + 5'-deoxyadenosine + L-methionine + 2 oxidized [2Fe-2S]-[ferredoxin] + S-adenosyl-L-homocysteine. Functionally, specifically methylates position 2 of adenine 2503 in 23S rRNA and position 2 of adenine 37 in tRNAs. m2A2503 modification seems to play a crucial role in the proofreading step occurring at the peptidyl transferase center and thus would serve to optimize ribosomal fidelity. This chain is Dual-specificity RNA methyltransferase RlmN, found in Coxiella burnetii (strain CbuK_Q154) (Coxiella burnetii (strain Q154)).